Consider the following 523-residue polypeptide: Type 2 DNA topoisomerase 6 subunit B (523 aa).

Residues N48, D80, 101 to 102 (SK), 110 to 117 (GQQGLGCS), and K436 contribute to the ATP site.

The protein belongs to the TOP6B family. Homodimer. Heterotetramer of two Top6A and two Top6B chains.

It catalyses the reaction ATP-dependent breakage, passage and rejoining of double-stranded DNA.. In terms of biological role, relaxes both positive and negative superturns and exhibits a strong decatenase activity. The chain is Type 2 DNA topoisomerase 6 subunit B from Methanothermobacter thermautotrophicus (strain ATCC 29096 / DSM 1053 / JCM 10044 / NBRC 100330 / Delta H) (Methanobacterium thermoautotrophicum).